The following is a 292-amino-acid chain: 4-hydroxy-tetrahydrodipicolinate synthase (292 aa).

Position 45 (T45) interacts with pyruvate. Y133 functions as the Proton donor/acceptor in the catalytic mechanism. K161 acts as the Schiff-base intermediate with substrate in catalysis. I203 lines the pyruvate pocket.

Belongs to the DapA family. Homotetramer; dimer of dimers.

Its subcellular location is the cytoplasm. It catalyses the reaction L-aspartate 4-semialdehyde + pyruvate = (2S,4S)-4-hydroxy-2,3,4,5-tetrahydrodipicolinate + H2O + H(+). The protein operates within amino-acid biosynthesis; L-lysine biosynthesis via DAP pathway; (S)-tetrahydrodipicolinate from L-aspartate: step 3/4. Functionally, catalyzes the condensation of (S)-aspartate-beta-semialdehyde [(S)-ASA] and pyruvate to 4-hydroxy-tetrahydrodipicolinate (HTPA). In Aromatoleum aromaticum (strain DSM 19018 / LMG 30748 / EbN1) (Azoarcus sp. (strain EbN1)), this protein is 4-hydroxy-tetrahydrodipicolinate synthase.